We begin with the raw amino-acid sequence, 306 residues long: Methyl-CpG-binding domain-containing protein 7 (306 aa).

The span at 1-11 (MQTRSSSSPSA) shows a compositional bias: polar residues. The disordered stretch occupies residues 1–21 (MQTRSSSSPSANHRRETQLQI). 3 MBD domains span residues 21 to 92 (IADP…QDKT), 106 to 171 (GVEY…RVLQ), and 172 to 242 (NRRG…ERLP). Asymmetric dimethylarginine occurs at positions 118, 145, and 174. The segment at 163 to 306 (IEQQLRVLQN…AFVSLIEDRS (144 aa)) is required for interaction with PRMT11.

In terms of assembly, interacts with PRMT11. Interacts (via C-terminus) with IDM2, but not with IDM1. Interacts with IDM3. Part of a complex made of MBD7, IDM1, IDM2 and IDM3. Methylated by PRMT11. As to expression, expressed in leaves, buds, flowers, stems, siliques, mature seeds and roots.

Its subcellular location is the nucleus. The protein resides in the chromosome. Transcriptional regulator that binds CpG islands in promoters where the DNA is methylated at position 5 of cytosine within CpG dinucleotides. May directly affect chromatin structure by inducing intra- and inter- chromatin compaction via bridging over multiple methylated CpG sites. Acts as an anti-silencing factor that prevents DNA hypermethylation and gene repression. Requires high mCG density for binding. Recognizes preferentially mCGs located in transposable elements. Required for active DNA demethylation. Prefers to target genomic loci around chromocenters. The protein is Methyl-CpG-binding domain-containing protein 7 of Arabidopsis thaliana (Mouse-ear cress).